The sequence spans 365 residues: Aminomethyltransferase (365 aa).

This sequence belongs to the GcvT family. As to quaternary structure, the glycine cleavage system is composed of four proteins: P, T, L and H.

The enzyme catalyses N(6)-[(R)-S(8)-aminomethyldihydrolipoyl]-L-lysyl-[protein] + (6S)-5,6,7,8-tetrahydrofolate = N(6)-[(R)-dihydrolipoyl]-L-lysyl-[protein] + (6R)-5,10-methylene-5,6,7,8-tetrahydrofolate + NH4(+). The glycine cleavage system catalyzes the degradation of glycine. This Desulfitobacterium hafniense (strain DSM 10664 / DCB-2) protein is Aminomethyltransferase.